Here is a 511-residue protein sequence, read N- to C-terminus: 2,3-bisphosphoglycerate-independent phosphoglycerate mutase (511 aa).

Mn(2+) is bound at residue D12. Y36 is modified (phosphotyrosine). Residue S62 participates in Mn(2+) binding. The active-site Phosphoserine intermediate is S62. Substrate-binding positions include H123, 153–154 (RD), R185, R191, 261–264 (RPDR), and K336. D403, H407, D444, H445, and H462 together coordinate Mn(2+).

The protein belongs to the BPG-independent phosphoglycerate mutase family. As to quaternary structure, monomer. Mn(2+) is required as a cofactor.

The enzyme catalyses (2R)-2-phosphoglycerate = (2R)-3-phosphoglycerate. It participates in carbohydrate degradation; glycolysis; pyruvate from D-glyceraldehyde 3-phosphate: step 3/5. Functionally, essential for rapid growth and for sporulation. Catalyzes the interconversion of 2-phosphoglycerate and 3-phosphoglycerate. The polypeptide is 2,3-bisphosphoglycerate-independent phosphoglycerate mutase (Bacillus velezensis (strain DSM 23117 / BGSC 10A6 / LMG 26770 / FZB42) (Bacillus amyloliquefaciens subsp. plantarum)).